A 497-amino-acid polypeptide reads, in one-letter code: Glycerol kinase (497 aa).

ADP is bound at residue T13. Positions 13, 14, and 15 each coordinate ATP. T13 contacts sn-glycerol 3-phosphate. R17 provides a ligand contact to ADP. Sn-glycerol 3-phosphate is bound by residues R83, E84, and Y135. R83, E84, and Y135 together coordinate glycerol. Position 231 is a phosphohistidine; by HPr (H231). D245 serves as a coordination point for sn-glycerol 3-phosphate. Glycerol contacts are provided by D245 and Q246. The ADP site is built by T267 and G310. ATP-binding residues include T267, G310, Q314, and G411. Positions 411 and 415 each coordinate ADP.

It belongs to the FGGY kinase family. Homotetramer and homodimer (in equilibrium). Post-translationally, the phosphoenolpyruvate-dependent sugar phosphotransferase system (PTS), including enzyme I, and histidine-containing protein (HPr) are required for the phosphorylation, which leads to the activation of the enzyme.

It carries out the reaction glycerol + ATP = sn-glycerol 3-phosphate + ADP + H(+). It functions in the pathway polyol metabolism; glycerol degradation via glycerol kinase pathway; sn-glycerol 3-phosphate from glycerol: step 1/1. Activated by phosphorylation and inhibited by fructose 1,6-bisphosphate (FBP). In terms of biological role, key enzyme in the regulation of glycerol uptake and metabolism. Catalyzes the phosphorylation of glycerol to yield sn-glycerol 3-phosphate. The chain is Glycerol kinase from Listeria monocytogenes serotype 4a (strain HCC23).